We begin with the raw amino-acid sequence, 374 residues long: DNA replication and repair protein RecF (374 aa).

34–41 contacts ATP; the sequence is GDNGAGKT.

This sequence belongs to the RecF family.

It is found in the cytoplasm. In terms of biological role, the RecF protein is involved in DNA metabolism; it is required for DNA replication and normal SOS inducibility. RecF binds preferentially to single-stranded, linear DNA. It also seems to bind ATP. In Rhizobium leguminosarum bv. trifolii (strain WSM2304), this protein is DNA replication and repair protein RecF.